Reading from the N-terminus, the 83-residue chain is Small ribosomal subunit protein bS18 (83 aa).

The protein belongs to the bacterial ribosomal protein bS18 family. As to quaternary structure, part of the 30S ribosomal subunit. Forms a tight heterodimer with protein bS6.

Its function is as follows. Binds as a heterodimer with protein bS6 to the central domain of the 16S rRNA, where it helps stabilize the platform of the 30S subunit. The chain is Small ribosomal subunit protein bS18 from Tropheryma whipplei (strain TW08/27) (Whipple's bacillus).